The primary structure comprises 438 residues: Glycerol-3-phosphate acyltransferase 3 (438 aa).

Residues 14 to 34 traverse the membrane as a helical segment; the sequence is WLTLVGGLILLPSAFGLSLGI. Residues S68 and S77 each carry the phosphoserine modification. Transmembrane regions (helical) follow at residues 137–157 and 161–181; these read ISPRLTMVWVLGVLVRYCFLL and VTLAFIGISLLIIGTTLVGQL. Positions 229–234 match the HXXXXD motif motif; it reads HTSPID.

The protein belongs to the 1-acyl-sn-glycerol-3-phosphate acyltransferase family. In terms of tissue distribution, most abundant in epididymal fat, followed by small intestine, brown adipose tissue, kidney, heart and colon.

The protein localises to the endoplasmic reticulum membrane. It catalyses the reaction sn-glycerol 3-phosphate + an acyl-CoA = a 1-acyl-sn-glycero-3-phosphate + CoA. The enzyme catalyses a 1-acyl-sn-glycero-3-phosphate + an acyl-CoA = a 1,2-diacyl-sn-glycero-3-phosphate + CoA. It carries out the reaction dodecanoyl-CoA + sn-glycerol 3-phosphate = 1-dodecanoyl-sn-glycerol 3-phosphate + CoA. The catalysed reaction is sn-glycerol 3-phosphate + hexadecanoyl-CoA = 1-hexadecanoyl-sn-glycero-3-phosphate + CoA. It catalyses the reaction sn-glycerol 3-phosphate + (9Z)-octadecenoyl-CoA = 1-(9Z-octadecenoyl)-sn-glycero-3-phosphate + CoA. The enzyme catalyses (9Z,12Z)-octadecadienoyl-CoA + sn-glycerol 3-phosphate = 1-(9Z,12Z)-octadecadienoyl-sn-glycero-3-phosphate + CoA. It carries out the reaction 1-tetradecanoyl-sn-glycerol 3-phosphate + (9Z)-octadecenoyl-CoA = 1-tetradecanoyl-2-(9Z)-octadecenoyl-sn-glycero-3-phosphate + CoA. The catalysed reaction is 1-hexadecanoyl-sn-glycero-3-phosphate + (9Z)-octadecenoyl-CoA = 1-hexadecanoyl-2-(9Z-octadecenoyl)-sn-glycero-3-phosphate + CoA. It catalyses the reaction 1-(9Z-octadecenoyl)-sn-glycero-3-phosphate + (9Z)-octadecenoyl-CoA = 1,2-di-(9Z-octadecenoyl)-sn-glycero-3-phosphate + CoA. The enzyme catalyses 1-(6Z,9Z,12Z-octadecatrienoyl)-sn-glycero-3-phosphate + (9Z)-octadecenoyl-CoA = (6Z,9Z,12Z)-octadecatrienoyl-2-(9Z)-octadecenoyl-sn-glycero-3-phosphate + CoA. It carries out the reaction 1-(9Z,12Z,15Z)-octadecatrienoyl-sn-glycero-3-phosphate + (9Z)-octadecenoyl-CoA = 1-(9Z,12Z,15Z)-octadecatrienoyl-2-(9Z)-octadecenoyl-sn-glycero-3-phosphate + CoA. The catalysed reaction is 1-(9Z-octadecenoyl)-sn-glycero-3-phosphate + tetradecanoyl-CoA = 1-(9Z)-octadecenoyl-2-tetradecanoyl-sn-glycero-3-phosphate + CoA. It catalyses the reaction 1-(9Z-octadecenoyl)-sn-glycero-3-phosphate + hexadecanoyl-CoA = 1-(9Z)-octadecenoyl-2-hexadecanoyl-sn-glycero-3-phosphate + CoA. The enzyme catalyses 1-(9Z-octadecenoyl)-sn-glycero-3-phosphate + octadecanoyl-CoA = 1-(9Z-octadecenoyl)-2-octadecanoyl-sn-glycero-3-phosphate + CoA. It carries out the reaction 1-(9Z-octadecenoyl)-sn-glycero-3-phosphate + (9Z,12Z)-octadecadienoyl-CoA = 1-(9Z)-octadecenoyl-2-(9Z,12Z)-octadecadienoyl-sn-glycero-3-phosphate + CoA. The catalysed reaction is 1-(5Z,8Z,11Z,14Z-eicosatetraenoyl)-sn-glycero-3-phosphate + (9Z)-octadecenoyl-CoA = 1-(5Z,8Z,11Z,14Z)-eicosatetraenoyl-2-(9Z)-octadecenoyl-sn-glycero-3-phosphate + CoA. The protein operates within glycerolipid metabolism; triacylglycerol biosynthesis. It functions in the pathway phospholipid metabolism; CDP-diacylglycerol biosynthesis; CDP-diacylglycerol from sn-glycerol 3-phosphate: step 1/3. Converts glycerol-3-phosphate to 1-acyl-sn-glycerol-3-phosphate (lysophosphatidic acid or LPA) by incorporating an acyl moiety at the sn-1 position of the glycerol backbone. Also converts LPA into 1,2-diacyl-sn-glycerol-3-phosphate (phosphatidic acid or PA) by incorporating an acyl moiety at the sn-2 position of the glycerol backbone. Protects cells against lipotoxicity. The polypeptide is Glycerol-3-phosphate acyltransferase 3 (Mus musculus (Mouse)).